A 358-amino-acid polypeptide reads, in one-letter code: tRNA-specific 2-thiouridylase MnmA (358 aa).

ATP-binding positions include 7 to 14 (AMSGGVDS) and Leu-33. The active-site Nucleophile is Cys-101. Cys-101 and Cys-197 are disulfide-bonded. Gly-125 is a binding site for ATP. Residues 147-149 (KDQ) are interaction with tRNA. Cys-197 serves as the catalytic Cysteine persulfide intermediate.

Belongs to the MnmA/TRMU family.

It localises to the cytoplasm. It catalyses the reaction S-sulfanyl-L-cysteinyl-[protein] + uridine(34) in tRNA + AH2 + ATP = 2-thiouridine(34) in tRNA + L-cysteinyl-[protein] + A + AMP + diphosphate + H(+). In terms of biological role, catalyzes the 2-thiolation of uridine at the wobble position (U34) of tRNA, leading to the formation of s(2)U34. The polypeptide is tRNA-specific 2-thiouridylase MnmA (Rickettsia typhi (strain ATCC VR-144 / Wilmington)).